Here is a 578-residue protein sequence, read N- to C-terminus: Trehalase (578 aa).

The first 19 residues, 1–19 (MPGSTWELHLLLLLGLGLG), serve as a signal peptide directing secretion. N-linked (GlcNAc...) asparagine glycosylation occurs at Asn78. Substrate contacts are provided by residues Arg168, 175–176 (WD), Asn212, and 221–223 (RSQ). Residue Asn261 is glycosylated (N-linked (GlcNAc...) asparagine). Substrate-binding positions include 286-288 (RPE) and Gly319. The active-site Proton donor/acceptor is the Asp321. Residue Asn369 is glycosylated (N-linked (GlcNAc...) asparagine). Glu514 acts as the Proton donor/acceptor in catalysis. Substrate is bound at residue Glu528. The GPI-anchor amidated serine moiety is linked to residue Ser555. The propeptide at 556–578 (GTQLALLEPHCLAAALLLSFLTR) is removed in mature form.

The protein belongs to the glycosyl hydrolase 37 family. In terms of assembly, homodimer; disulfide-linked. As to expression, expressed in small intestine, kidney, and to a lesser extent in liver.

The protein localises to the cell membrane. It carries out the reaction alpha,alpha-trehalose + H2O = alpha-D-glucose + beta-D-glucose. Functionally, intestinal trehalase is probably involved in the hydrolysis of ingested trehalose. This chain is Trehalase (TREH), found in Oryctolagus cuniculus (Rabbit).